Reading from the N-terminus, the 395-residue chain is S-adenosylmethionine synthase (395 aa).

Residue His-14 participates in ATP binding. Asp-16 contributes to the Mg(2+) binding site. Residue Glu-42 coordinates K(+). Residues Glu-55 and Gln-98 each contribute to the L-methionine site. The interval 98–108 is flexible loop; that stretch reads QSPDIALGVDK. Residues 174–176, 240–241, Asp-249, 255–256, Ala-272, and Lys-276 each bind ATP; these read DGK, RF, and RK. Residue Asp-249 participates in L-methionine binding. An L-methionine-binding site is contributed by Lys-280.

Belongs to the AdoMet synthase family. Homotetramer; dimer of dimers. Mg(2+) is required as a cofactor. It depends on K(+) as a cofactor.

The protein resides in the cytoplasm. The catalysed reaction is L-methionine + ATP + H2O = S-adenosyl-L-methionine + phosphate + diphosphate. Its pathway is amino-acid biosynthesis; S-adenosyl-L-methionine biosynthesis; S-adenosyl-L-methionine from L-methionine: step 1/1. In terms of biological role, catalyzes the formation of S-adenosylmethionine (AdoMet) from methionine and ATP. The overall synthetic reaction is composed of two sequential steps, AdoMet formation and the subsequent tripolyphosphate hydrolysis which occurs prior to release of AdoMet from the enzyme. The chain is S-adenosylmethionine synthase from Thermotoga neapolitana (strain ATCC 49049 / DSM 4359 / NBRC 107923 / NS-E).